Reading from the N-terminus, the 277-residue chain is MEMO1 family protein TM_0087 (277 aa).

Belongs to the MEMO1 family.

The protein is MEMO1 family protein TM_0087 of Thermotoga maritima (strain ATCC 43589 / DSM 3109 / JCM 10099 / NBRC 100826 / MSB8).